Reading from the N-terminus, the 123-residue chain is Large ribosomal subunit protein uL14c (123 aa).

The protein belongs to the universal ribosomal protein uL14 family. Part of the 50S ribosomal subunit. Interacts with IOJAP.

The protein localises to the plastid. It is found in the chloroplast. Functionally, binds to 23S rRNA. The protein is Large ribosomal subunit protein uL14c of Zea mays (Maize).